Here is a 435-residue protein sequence, read N- to C-terminus: Trigger factor (435 aa).

In terms of domain architecture, PPIase FKBP-type spans 162–247 (GDRINIDYRG…LSGVESSKLP (86 aa)).

This sequence belongs to the FKBP-type PPIase family. Tig subfamily.

The protein resides in the cytoplasm. The catalysed reaction is [protein]-peptidylproline (omega=180) = [protein]-peptidylproline (omega=0). Its function is as follows. Involved in protein export. Acts as a chaperone by maintaining the newly synthesized protein in an open conformation. Functions as a peptidyl-prolyl cis-trans isomerase. In Nitrosospira multiformis (strain ATCC 25196 / NCIMB 11849 / C 71), this protein is Trigger factor.